The sequence spans 410 residues: LL-diaminopimelate aminotransferase (410 aa).

Residues Tyr-15 and Gly-42 each contribute to the substrate site. Pyridoxal 5'-phosphate is bound by residues Tyr-72, 108 to 109, Tyr-132, Asn-188, Tyr-219, and 247 to 249; these read AK and SFS. Substrate is bound by residues Lys-109, Tyr-132, and Asn-188. N6-(pyridoxal phosphate)lysine is present on Lys-250. Residues Arg-258 and Asn-293 each contribute to the pyridoxal 5'-phosphate site. Asn-293 and Arg-389 together coordinate substrate.

Belongs to the class-I pyridoxal-phosphate-dependent aminotransferase family. LL-diaminopimelate aminotransferase subfamily. As to quaternary structure, homodimer. It depends on pyridoxal 5'-phosphate as a cofactor.

The catalysed reaction is (2S,6S)-2,6-diaminopimelate + 2-oxoglutarate = (S)-2,3,4,5-tetrahydrodipicolinate + L-glutamate + H2O + H(+). It participates in amino-acid biosynthesis; L-lysine biosynthesis via DAP pathway; LL-2,6-diaminopimelate from (S)-tetrahydrodipicolinate (aminotransferase route): step 1/1. Involved in the synthesis of meso-diaminopimelate (m-DAP or DL-DAP), required for both lysine and peptidoglycan biosynthesis. Catalyzes the direct conversion of tetrahydrodipicolinate to LL-diaminopimelate. Can also use m-DAP instead of LL-DAP as the amino-group donor. The chain is LL-diaminopimelate aminotransferase from Bacteroides fragilis (strain ATCC 25285 / DSM 2151 / CCUG 4856 / JCM 11019 / LMG 10263 / NCTC 9343 / Onslow / VPI 2553 / EN-2).